A 527-amino-acid chain; its full sequence is MDTSQLLTLWNDRASQLGVVDLSLLGVGAVIAFAWLFSGGKKARTPPGPRPLPILGNLLSIPTTHPWKIYDKWCRDNNSDLMYLRLPGGNGILVLNTMKAATDLLVKRSTIYSDRPQSIMLSDLMGMSWVFGLMQYGDAWKQHRRLFHREFEGSTAVRMHAQNAARRLLQRLLNSNVNYARDMQLTTGDMILSATYGITPKSEDDYFIKLAEGLVGALAVVAGGGFLVDLIPPMRWIPRWFPGGGFKKQADEWKGLGVTARSVPFNHVKEQLANGTAPLSIASHFLAAHQEDDESTNESKEFMQNILAEAYLGGAGATVGTLCTFTLAMALNPDVQKRAQAAIDEALHGERLPDFTDFGNIPYMDALLNEILRWHPGAPLGLFHSSNKDDVYEGYLVPKGTFISPNVWAILHDPAVYGEDVDEFRPERFLTKDGKRNDIPDSEIAFGFGRRICPGRTMGRDTLWITSASILATFDITNPVDKEGKPLDPASIEYSNSMSSRPPYFDCTFKLRSKAAEALVRNGLNEA.

A helical transmembrane segment spans residues 17 to 37; it reads LGVVDLSLLGVGAVIAFAWLF. Asn77, Asn274, and Asn297 each carry an N-linked (GlcNAc...) asparagine glycan. Cys453 is a binding site for heme.

Belongs to the cytochrome P450 family. Requires heme as cofactor.

The protein resides in the membrane. It catalyses the reaction cyathadiol + reduced [NADPH--hemoprotein reductase] + O2 = cyathatriol + oxidized [NADPH--hemoprotein reductase] + H2O + H(+). It functions in the pathway secondary metabolite biosynthesis. In terms of biological role, cytochrome P450 monooxygenase; part of the gene cluster that mediates the biosynthesis of erinacines, cyathane-xylosides that show unique biological activities, including leishmanicidal activity, stimulating activity for nerve growth-factor synthesis, and agonistic activity toward the kappa opioid receptor. Within the pathway, eriA catalyzes C-11 hydroxylation in the presence of the short chain dehydrogenase/reductase (SDR) eriH, which leads to the production of cyathatriol. The first step of the erinacines biosynthesis pathway is catalyzed by the geranylgeranyl diphosphate (GGPP) synthase eriE via conversion of farnesyl pyrophosphate and isopentyl pyrophosphate into geranylgeranyl pyrophosphate (GGPP). GGPP is then substrate of the diterpene cyclase eriG for the production of cyatha-3,12-diene. The cytochrome P450 monooxygenase eriI then hydroxylates cyatha-3,12-diene at C-14 of the seven-membered ring to produce erinacol, which is further hydroxylated at C-15 by the cytochrome P450 monooxygenase eriC to yield cyathadiol. The cytochrome P450 monooxygenase eriA then catalyzes C-11 hydroxylation in the presence of the short chain dehydrogenase/reductase (SDR) eriH, which leads to the production of cyathatriol. The acetyltransferase eriL converts cyathatriol into 11-O-acetyl-cyathatriol. The SDR eriH catalyzes further oxidation of 11-O-acetyl-cyathatriol into 1-O-acetylcyathin A3. Finally, the glycosyl transferase eriJ tranfers xylose from UDP-xylose onto C-14 of 11-O-acetyl-cyathatriol to form eracine Q. EriJ is also able to convert 11-O-acetyl-cyathatriol to eracine Q2 by using UDP-D-glucose as cosubstrate, but at a lower rate. The chain is Cytochrome P450 monooxyhenase eriA from Hericium erinaceus (Lion's mane mushroom).